A 591-amino-acid chain; its full sequence is Putative F-box protein At1g32140 (591 aa).

Positions 2 to 49 constitute an F-box domain; that stretch reads TMMSDLSLDLVEEILCRVPITSLKAVRSSCKLWNVLSKNRILCKTEAR. A compositionally biased stretch (basic residues) spans 567–581; it reads AGRKRKEKKTKRKSK. Positions 567–591 are disordered; the sequence is AGRKRKEKKTKRKSKDKQMKLSNKV.

This is Putative F-box protein At1g32140 from Arabidopsis thaliana (Mouse-ear cress).